The primary structure comprises 175 residues: ATP-dependent protease subunit HslV (175 aa).

Residue Thr5 is part of the active site. The Na(+) site is built by Gly160, Asp163, and Thr166.

Belongs to the peptidase T1B family. HslV subfamily. A double ring-shaped homohexamer of HslV is capped on each side by a ring-shaped HslU homohexamer. The assembly of the HslU/HslV complex is dependent on binding of ATP.

It localises to the cytoplasm. It carries out the reaction ATP-dependent cleavage of peptide bonds with broad specificity.. Allosterically activated by HslU binding. Protease subunit of a proteasome-like degradation complex believed to be a general protein degrading machinery. The polypeptide is ATP-dependent protease subunit HslV (Myxococcus xanthus).